The primary structure comprises 265 residues: Glutamate racemase (265 aa).

Substrate-binding positions include 12–13 (DS) and 44–45 (YG). C75 functions as the Proton donor/acceptor in the catalytic mechanism. Substrate is bound at residue 76 to 77 (NT). C186 functions as the Proton donor/acceptor in the catalytic mechanism. 187 to 188 (TH) lines the substrate pocket.

This sequence belongs to the aspartate/glutamate racemases family.

The catalysed reaction is L-glutamate = D-glutamate. Its pathway is cell wall biogenesis; peptidoglycan biosynthesis. Functionally, provides the (R)-glutamate required for cell wall biosynthesis. The chain is Glutamate racemase from Pseudomonas entomophila (strain L48).